Consider the following 441-residue polypeptide: tRNA pseudouridine synthase Pus10 (441 aa).

Residue Asp-268 is the Nucleophile of the active site. 2 residues coordinate substrate: Tyr-333 and Tyr-405.

The protein belongs to the pseudouridine synthase Pus10 family.

It carries out the reaction uridine(54) in tRNA = pseudouridine(54) in tRNA. The catalysed reaction is uridine(55) in tRNA = pseudouridine(55) in tRNA. Responsible for synthesis of pseudouridine from uracil-54 and uracil-55 in the psi GC loop of transfer RNAs. The protein is tRNA pseudouridine synthase Pus10 of Thermosphaera aggregans (strain DSM 11486 / M11TL).